A 66-amino-acid chain; its full sequence is Defensin-B1 (66 aa).

Positions Met-1–Gly-23 are cleaved as a signal peptide. 3 disulfide bridges follow: Cys-29–Cys-56, Cys-36–Cys-50, and Cys-40–Cys-57. The propeptide occupies Val-61–Gly-66.

This sequence belongs to the beta-defensin family. As to expression, expressed at low levels in kidney, lung, and spleen.

The protein localises to the secreted. Its function is as follows. Has bactericidal activity. May act as a ligand for C-C chemokine receptor CCR6. Positively regulates the sperm motility and bactericidal activity in a CCR6-dependent manner. Binds to CCR6 and triggers Ca2+ mobilization in the sperm which is important for its motility. The protein is Defensin-B1 of Ornithorhynchus anatinus (Duckbill platypus).